A 244-amino-acid polypeptide reads, in one-letter code: Tegument protein UL51 homolog (244 aa).

Residue Cys10 is the site of S-palmitoyl cysteine; by host attachment.

It belongs to the herpesviridae UL51 family. As to quaternary structure, oligomerizes. Interacts with ORF55; this interaction mediates ORF55 incorporation to virions. Post-translationally, phosphorylated. Palmitoylation is necessary for Golgi localization.

Its subcellular location is the virion tegument. The protein resides in the host cytoplasm. The protein localises to the host Golgi apparatus. In terms of biological role, plays several roles during the time course of infection, including egress of virus particles from the perinuclear space and secondary envelopment of cytoplasmic capsids that bud into specific trans-Golgi network (TGN)-derived membranes. This chain is Tegument protein UL51 homolog (8), found in Equus caballus (Horse).